A 163-amino-acid polypeptide reads, in one-letter code: Phosphopantetheine adenylyltransferase (163 aa).

Residue T10 participates in substrate binding. ATP contacts are provided by residues 10 to 11 (TF) and H18. Substrate-binding residues include K42, L74, and R88. ATP contacts are provided by residues 89–91 (GLR), E99, and 124–130 (NSFISST).

This sequence belongs to the bacterial CoaD family. In terms of assembly, homohexamer. Mg(2+) serves as cofactor.

It is found in the cytoplasm. The enzyme catalyses (R)-4'-phosphopantetheine + ATP + H(+) = 3'-dephospho-CoA + diphosphate. Its pathway is cofactor biosynthesis; coenzyme A biosynthesis; CoA from (R)-pantothenate: step 4/5. In terms of biological role, reversibly transfers an adenylyl group from ATP to 4'-phosphopantetheine, yielding dephospho-CoA (dPCoA) and pyrophosphate. This chain is Phosphopantetheine adenylyltransferase, found in Shewanella sp. (strain MR-4).